The chain runs to 198 residues: Na(+)-translocating NADH-quinone reductase subunit E (198 aa).

The next 6 helical transmembrane spans lie at 11–31, 39–59, 77–97, 110–130, 140–160, and 176–196; these read SIFIENMALSFFLGMCTFLAV, FGLGVAVIVVLTIAIPVNNLV, FLNFITFIGVIAALVQILEMI, GIFLPLITVNCAIFGGVSFMV, IVYGFGSGVGWMLAIVALAGI, and LGITFITVGLMALGFMSFSGV.

Belongs to the NqrDE/RnfAE family. In terms of assembly, composed of six subunits; NqrA, NqrB, NqrC, NqrD, NqrE and NqrF.

The protein localises to the cell inner membrane. It catalyses the reaction a ubiquinone + n Na(+)(in) + NADH + H(+) = a ubiquinol + n Na(+)(out) + NAD(+). Functionally, NQR complex catalyzes the reduction of ubiquinone-1 to ubiquinol by two successive reactions, coupled with the transport of Na(+) ions from the cytoplasm to the periplasm. NqrA to NqrE are probably involved in the second step, the conversion of ubisemiquinone to ubiquinol. This chain is Na(+)-translocating NADH-quinone reductase subunit E, found in Photobacterium profundum (strain SS9).